A 296-amino-acid chain; its full sequence is Ribosomal protein L11 methyltransferase (296 aa).

Residues threonine 145, glycine 166, aspartate 188, and asparagine 230 each coordinate S-adenosyl-L-methionine.

Belongs to the methyltransferase superfamily. PrmA family.

It localises to the cytoplasm. The enzyme catalyses L-lysyl-[protein] + 3 S-adenosyl-L-methionine = N(6),N(6),N(6)-trimethyl-L-lysyl-[protein] + 3 S-adenosyl-L-homocysteine + 3 H(+). Functionally, methylates ribosomal protein L11. In Histophilus somni (strain 2336) (Haemophilus somnus), this protein is Ribosomal protein L11 methyltransferase.